A 452-amino-acid chain; its full sequence is tRNA modification GTPase MnmE (452 aa).

Positions 22, 79, and 119 each coordinate (6S)-5-formyl-5,6,7,8-tetrahydrofolate. The TrmE-type G domain occupies 215-375; the sequence is GMKVVIAGRP…LRQHLKQSMG (161 aa). Asparagine 225 is a K(+) binding site. Residues 225–230, 244–250, 269–272, and 333–336 each bind GTP; these read NAGKSS, TDIAGTT, DTAG, and NKAD. Serine 229 provides a ligand contact to Mg(2+). K(+) is bound by residues threonine 244, isoleucine 246, and threonine 249. Position 250 (threonine 250) interacts with Mg(2+). Lysine 452 provides a ligand contact to (6S)-5-formyl-5,6,7,8-tetrahydrofolate.

This sequence belongs to the TRAFAC class TrmE-Era-EngA-EngB-Septin-like GTPase superfamily. TrmE GTPase family. In terms of assembly, homodimer. Heterotetramer of two MnmE and two MnmG subunits. It depends on K(+) as a cofactor.

Its subcellular location is the cytoplasm. In terms of biological role, exhibits a very high intrinsic GTPase hydrolysis rate. Involved in the addition of a carboxymethylaminomethyl (cmnm) group at the wobble position (U34) of certain tRNAs, forming tRNA-cmnm(5)s(2)U34. The polypeptide is tRNA modification GTPase MnmE (Histophilus somni (strain 2336) (Haemophilus somnus)).